The primary structure comprises 167 residues: Small ribosomal subunit protein uS5 (167 aa).

The S5 DRBM domain maps to 12 to 75 (LREKLITINR…ERARGGMRTV (64 aa)).

Belongs to the universal ribosomal protein uS5 family. Part of the 30S ribosomal subunit. Contacts proteins S4 and S8.

With S4 and S12 plays an important role in translational accuracy. In terms of biological role, located at the back of the 30S subunit body where it stabilizes the conformation of the head with respect to the body. This is Small ribosomal subunit protein uS5 from Halorhodospira halophila (strain DSM 244 / SL1) (Ectothiorhodospira halophila (strain DSM 244 / SL1)).